The following is a 236-amino-acid chain: UPF0257 lipoprotein YnfC (236 aa).

Residues 1 to 16 form the signal peptide; that stretch reads MKKPLLLTLLCMILAG. Residue C17 is the site of N-palmitoyl cysteine attachment. Residue C17 is the site of S-diacylglycerol cysteine attachment.

This sequence belongs to the UPF0257 family.

The protein localises to the cell membrane. The protein is UPF0257 lipoprotein YnfC of Salmonella heidelberg (strain SL476).